We begin with the raw amino-acid sequence, 315 residues long: Eukaryotic translation initiation factor 2 subunit 1 (315 aa).

Residues 17 to 88 enclose the S1 motif domain; the sequence is EDVVMVNVRS…EKGYIDLSKR (72 aa). Position 49 is a phosphoserine; by HRI (Ser-49). Ser-52 bears the Phosphoserine mark. Lys-141 carries the post-translational modification N6-acetyllysine. Phosphoserine is present on Ser-158. 2 positions are modified to phosphothreonine: Thr-279 and Thr-281. Positions 293 to 315 are disordered; sequence LERENAEVDGDDDAEEMEAKAED. Acidic residues predominate over residues 299–308; that stretch reads EVDGDDDAEE.

Belongs to the eIF-2-alpha family. Eukaryotic translation initiation factor 2 eIF2 is a heterotrimeric complex composed of an alpha (EIF2S1), a beta (EIF2S2) and a gamma (EIF2S3) chain. eIF2 is member of the 43S pre-initiation complex (43S PIC). eIF2 forms a complex with at least CELF1/CUGBP1, CALR, CALR3, EIF2S1, EIF2S2, HSP90B1 and HSPA5. Interaction with METAP2 protects EIF2S1 from inhibitory phosphorylation. Interacts with ABCF1 isoform 2. Associates with ribosomes. Interacts with DDX3X in an RNA-independent manner. Interacts with CDC123. In terms of assembly, (Microbial infection) Interacts with rotavirus A non-structural protein 2; this interaction probably plays a role in the sequestration of IF2A in viral factories. Interacts with rotavirus A non-structural protein 5; this interaction probably plays a role in its sequestration in viral factories. In terms of processing, phosphorylation at Ser-49 and Ser-52 stabilizes the eIF-2/GDP/eIF2B complex and prevents GDP/GTP exchange reaction, thus impairing the recycling of eIF-2 between successive rounds of initiation and leading to global inhibition of translation, while concomitantly initiating the preferential translation of integrated stress response (ISR)-specific mRNAs. Substrate for at least 4 kinases: EIF2AK1/HRI, EIF2AK2/PKR, EIF2AK3/PERK and EIF2AK4/GCN2. Phosphorylation on Ser-52 by the EIF2AK4/GCN2 protein kinase occurs in response to amino acid starvation and UV irradiation. Phosphorylation at Ser-52 by the EIF2AK3/PERK protein kinase occurs in response to the unfolded protein response. Phosphorylation at Ser-52 by EIF2AK1/HRI in response to mitochondrial damage promotes relocalization to the mitochondrial surface. Post-translationally, (Microbial infection) Phosphorylation by vaccinia virus protein E3 and rotavirus A stabilizes the eIF-2/GDP/eIF2B complex and prevents GDP/GTP exchange reaction, thus impairing the recycling of eIF-2 between successive rounds of initiation and leading to global inhibition of translation.

The protein resides in the cytoplasm. The protein localises to the stress granule. It localises to the cytosol. Its subcellular location is the mitochondrion. Activity is regulated by phosphorylation at Ser-49 and Ser-52, which stabilizes the eIF2/GDP/eIF2B complex and prevents the eIF2B-mediated exchange of GDP for GTP, thereby preventing the formation of the 43S pre-initiation complex (43S PIC). This results in the global attenuation of 5' cap-dependent protein synthesis and concomitant translation of ISR-specific mRNAs that contain a short upstream open reading frame (uORF) in their 5' UTR, such as ATF4, ATF5, DDIT3/CHOP and PPP1R15A/GADD34. Member of the eIF2 complex that functions in the early steps of protein synthesis by forming a ternary complex with GTP and initiator tRNA. This complex binds to a 40S ribosomal subunit, followed by mRNA binding to form a 43S pre-initiation complex (43S PIC). Junction of the 60S ribosomal subunit to form the 80S initiation complex is preceded by hydrolysis of the GTP bound to eIF2 and release of an eIF2-GDP binary complex. In order for eIF2 to recycle and catalyze another round of initiation, the GDP bound to eIF2 must exchange with GTP by way of a reaction catalyzed by eIF2B. EIF2S1/eIF2-alpha is a key component of the integrated stress response (ISR), required for adaptation to various stress: phosphorylation by metabolic-stress sensing protein kinases (EIF2AK1/HRI, EIF2AK2/PKR, EIF2AK3/PERK and EIF2AK4/GCN2) in response to stress converts EIF2S1/eIF2-alpha in a global protein synthesis inhibitor, leading to an attenuation of cap-dependent translation, while concomitantly initiating the preferential translation of ISR-specific mRNAs, such as the transcriptional activators ATF4 and QRICH1, and hence allowing ATF4- and QRICH1-mediated reprogramming. EIF2S1/eIF2-alpha also acts as an activator of mitophagy in response to mitochondrial damage: phosphorylation by EIF2AK1/HRI promotes relocalization to the mitochondrial surface, thereby triggering PRKN-independent mitophagy. The sequence is that of Eukaryotic translation initiation factor 2 subunit 1 from Homo sapiens (Human).